Consider the following 215-residue polypeptide: Protein Syd (215 aa).

It belongs to the Syd family.

It is found in the cell inner membrane. Its function is as follows. Interacts with the SecY protein in vivo. May bind preferentially to an uncomplexed state of SecY, thus functioning either as a chelating agent for excess SecY in the cell or as a regulatory factor that negatively controls the translocase function. The chain is Protein Syd from Shewanella amazonensis (strain ATCC BAA-1098 / SB2B).